The sequence spans 520 residues: Transposase for insertion sequence element IS21-like (520 aa).

The HTH IS21-type domain maps to 13 to 78 (YMWYKVRELQ…KYEEYVRGTL (66 aa)). The Integrase catalytic domain maps to 136-312 (LPETPYGEYA…VPSEEFAVEK (177 aa)).

The protein belongs to the transposase IS21/IS408/IS1162 family.

Involved in the transposition of the insertion sequence. The sequence is that of Transposase for insertion sequence element IS21-like (tnpA) from Bacteroides fragilis.